The chain runs to 225 residues: MVTRDRAENRDGPKMLKPLVEKRRRDRINRSLEELRLLLLERTRDQNLRNPKLEKAEILEFAVGYLRERSRVEPPGVPRSPVQDAEALASCYLSGFRECLLRLAAFAHDASPAARAQLFSALHGYLRPKPPRPKPVDPRPPAPRPSLDPAAPALGPALHQRPPVHQGHPSPRCAWSPSLCSPRAGDSGAPAPLTGLLPPPPPPHRQDGAPKAPLPPPPAFWRPWP.

One can recognise a bHLH domain in the interval 12–69; the sequence is GPKMLKPLVEKRRRDRINRSLEELRLLLLERTRDQNLRNPKLEKAEILEFAVGYLRER. Residues 92-122 enclose the Orange domain; it reads YLSGFRECLLRLAAFAHDASPAARAQLFSAL. Residues 125-225 are disordered; sequence YLRPKPPRPK…PPPAFWRPWP (101 aa). Low complexity predominate over residues 147–158; sequence LDPAAPALGPAL. Pro residues predominate over residues 212–225; that stretch reads APLPPPPAFWRPWP. The WRPW motif signature appears at 221 to 224; sequence WRPW.

As to quaternary structure, transcription repression requires formation of a complex with a corepressor protein of the Groucho/TLE family.

The protein resides in the nucleus. Transcriptional repressor. Represses transcription from both N box- and E box-containing promoters. May with HES1, cooperatively regulate somite formation in the presomitic mesoderm (PSM). May function as a segmentation clock, which is essential for coordinated somite segmentation. In Homo sapiens (Human), this protein is Transcription factor HES-7 (HES7).